A 179-amino-acid chain; its full sequence is Inosine/xanthosine triphosphatase (179 aa).

8–13 (TTNPAK) contacts substrate. Residues Asp38 and Glu68 each coordinate Mg(2+). 68-69 (EA) contacts substrate.

This sequence belongs to the YjjX NTPase family. Homodimer. It depends on Mg(2+) as a cofactor. The cofactor is Mn(2+).

The catalysed reaction is XTP + H2O = XDP + phosphate + H(+). The enzyme catalyses ITP + H2O = IDP + phosphate + H(+). Phosphatase that hydrolyzes non-canonical purine nucleotides such as XTP and ITP to their respective diphosphate derivatives. Probably excludes non-canonical purines from DNA/RNA precursor pool, thus preventing their incorporation into DNA/RNA and avoiding chromosomal lesions. The polypeptide is Inosine/xanthosine triphosphatase (Proteus mirabilis (strain HI4320)).